A 252-amino-acid chain; its full sequence is Autophagy-related protein 27 (252 aa).

Positions 1 to 15 are cleaved as a signal peptide; that stretch reads MILASLLTFATAALA. The MRH domain occupies 16–161; the sequence is FDCSDKELER…SMKTKAACIT (146 aa). Topologically, residues 16-176 are lumenal; the sequence is FDCSDKELER…KKEKHDNGES (161 aa). 3 disulfide bridges follow: cysteine 18-cysteine 57, cysteine 66-cysteine 73, and cysteine 130-cysteine 159. Asparagine 49 is a glycosylation site (N-linked (GlcNAc...) asparagine). A helical transmembrane segment spans residues 177–197; sequence WGWFTWIFIFLVLFLSIYIIG. The Cytoplasmic portion of the chain corresponds to 198 to 252; the sequence is GAWFQYNKGNAIDFQSALKEVVENFIELLKGLPSFGKEIIEKFTGRSNRGEYSAV.

The protein belongs to the ATG27 family.

The protein resides in the cytoplasmic vesicle membrane. It localises to the golgi apparatus membrane. The protein localises to the mitochondrion membrane. It is found in the preautophagosomal structure membrane. Its function is as follows. Plays a key role in autophagy. Effector of VPS34 phosphatidylinositol 3-phosphate kinase signaling. Regulates the cytoplasm to vacuole transport (Cvt) vesicle formation. Plays a role in ATG protein retrieval from the pre-autophagosomal structure (PAS) and is especially required for autophagy-dependent cycling of ATG9. Finally, plays an important role in biofilm formation and resistance to antifungal compounds such as fluconazole, itraconazole, terbinafine and caspofungin. The sequence is that of Autophagy-related protein 27 from Candida albicans (strain SC5314 / ATCC MYA-2876) (Yeast).